A 325-amino-acid chain; its full sequence is Glutarate 2-hydroxylase (325 aa).

Positions 160, 162, and 292 each coordinate Fe cation.

It belongs to the glutarate hydroxylase family. As to quaternary structure, homotetramer. Fe(2+) is required as a cofactor.

The enzyme catalyses glutarate + 2-oxoglutarate + O2 = (S)-2-hydroxyglutarate + succinate + CO2. Its pathway is amino-acid degradation. Its function is as follows. Acts as an alpha-ketoglutarate-dependent dioxygenase catalyzing hydroxylation of glutarate (GA) to L-2-hydroxyglutarate (L2HG). Functions in a L-lysine degradation pathway that proceeds via cadaverine, glutarate and L-2-hydroxyglutarate. In Escherichia coli O157:H7, this protein is Glutarate 2-hydroxylase.